The primary structure comprises 359 residues: Alanine racemase (359 aa).

The active-site Proton acceptor; specific for D-alanine is Lys35. Lys35 is subject to N6-(pyridoxal phosphate)lysine. Residue Arg131 coordinates substrate. The Proton acceptor; specific for L-alanine role is filled by Tyr253. Met301 contributes to the substrate binding site.

This sequence belongs to the alanine racemase family. Pyridoxal 5'-phosphate is required as a cofactor.

The enzyme catalyses L-alanine = D-alanine. It participates in amino-acid biosynthesis; D-alanine biosynthesis; D-alanine from L-alanine: step 1/1. Its function is as follows. Catalyzes the interconversion of L-alanine and D-alanine. May also act on other amino acids. This Laribacter hongkongensis (strain HLHK9) protein is Alanine racemase (alr).